The primary structure comprises 364 residues: Probable transcription factor At4g00390 (364 aa).

The interval 1-149 (MTKKLDPPTA…STKRVKKDEE (149 aa)) is disordered. A compositionally biased stretch (acidic residues) spans 13–32 (SDEDDVETSEDDSSSSEEDE). Residues 39–80 (ATTAAAPAKSTAVSAATPAKSTSVSAAAPSKSTAVSAAADSD) show a composition bias toward low complexity. A compositionally biased stretch (acidic residues) spans 81-93 (SGSESETDSDSES).

This sequence belongs to the GeBP family.

In Arabidopsis thaliana (Mouse-ear cress), this protein is Probable transcription factor At4g00390.